The sequence spans 539 residues: Chaperonin GroEL 2 (539 aa).

ATP contacts are provided by residues 29–32, 86–90, glycine 413, 477–479, and aspartate 493; these read TLGP, DGTTT, and NAA. The disordered stretch occupies residues 519-539; that stretch reads VVDKPEEEDSAAAGHGHGHSH.

Belongs to the chaperonin (HSP60) family. In terms of assembly, forms a cylinder of 14 subunits composed of two heptameric rings stacked back-to-back. Interacts with the co-chaperonin GroES.

It localises to the cytoplasm. The enzyme catalyses ATP + H2O + a folded polypeptide = ADP + phosphate + an unfolded polypeptide.. Functionally, together with its co-chaperonin GroES, plays an essential role in assisting protein folding. The GroEL-GroES system forms a nano-cage that allows encapsulation of the non-native substrate proteins and provides a physical environment optimized to promote and accelerate protein folding. In Saccharopolyspora erythraea (strain ATCC 11635 / DSM 40517 / JCM 4748 / NBRC 13426 / NCIMB 8594 / NRRL 2338), this protein is Chaperonin GroEL 2.